A 159-amino-acid chain; its full sequence is Lipoprotein LpqH (159 aa).

A signal peptide spans 1 to 21 (MKRGLTVAVAGAAILVAGLSG). Cysteine 22 carries N-palmitoyl cysteine lipidation. Cysteine 22 carries the S-diacylglycerol cysteine lipid modification. Positions 24–51 (SNKSTTGSGETTTAAGTTASPGAASGPK) are disordered. Low complexity predominate over residues 27-49 (STTGSGETTTAAGTTASPGAASG).

It belongs to the mycobacterial 19 kDa antigen family. Post-translationally, modified by Lgt on Cys-22 with an S-linked diacylglycerol with a mixture of C16, C18 and C19 fatty acids, signal peptide is removed by LspA, modifed by Lnt with an amide-linked mixture of C16 and C19 fatty acids.

It localises to the cell membrane. Functionally, might be involved in ligand transport. A host TLR2 agonist, modifies host gene expression in response to pathogen. The sequence is that of Lipoprotein LpqH (lpqH) from Mycobacterium bovis (strain ATCC BAA-935 / AF2122/97).